The primary structure comprises 216 residues: Nicotinamidase (216 aa).

The active site involves aspartate 8. 3 residues coordinate Zn(2+): aspartate 51, histidine 53, and histidine 94. Lysine 122 is a catalytic residue. The active-site Nucleophile is the cysteine 167.

The protein belongs to the isochorismatase family.

Its subcellular location is the cytoplasm. The protein localises to the nucleus. It localises to the peroxisome. The catalysed reaction is nicotinamide + H2O = nicotinate + NH4(+). It participates in cofactor biosynthesis; nicotinate biosynthesis; nicotinate from nicotinamide: step 1/1. Inhibited by N-ethylmaleimide, HgCl(2) and PCMB. Competitively inhibited by NAD, NMN and 3-acetylpyridine. Its function is as follows. Catalyzes the deamidation of nicotinamide, an early step in the NAD(+) salvage pathway. Positively regulates SIR2-mediated silencing and longevity by preventing the accumulation of intracellular nicotinamide, an inhibitor of SIR2, during times of stress. Also acts on nicotinyl hydroxamate. The sequence is that of Nicotinamidase (PNC1) from Saccharomyces cerevisiae (strain ATCC 204508 / S288c) (Baker's yeast).